Here is a 32-residue protein sequence, read N- to C-terminus: Cytochrome b6-f complex subunit 8 (32 aa).

A helical membrane pass occupies residues Ile-6–Val-26.

The protein belongs to the PetN family. In terms of assembly, the 4 large subunits of the cytochrome b6-f complex are cytochrome b6, subunit IV (17 kDa polypeptide, PetD), cytochrome f and the Rieske protein, while the 4 small subunits are PetG, PetL, PetM and PetN. The complex functions as a dimer.

It localises to the plastid. Its subcellular location is the chloroplast thylakoid membrane. Its function is as follows. Component of the cytochrome b6-f complex, which mediates electron transfer between photosystem II (PSII) and photosystem I (PSI), cyclic electron flow around PSI, and state transitions. This is Cytochrome b6-f complex subunit 8 from Illicium oligandrum (Star anise).